A 559-amino-acid chain; its full sequence is Dihydroxy-acid dehydratase (559 aa).

Cysteine 52 is a binding site for [2Fe-2S] cluster. Aspartate 84 contacts Mg(2+). Cysteine 125 serves as a coordination point for [2Fe-2S] cluster. Residues aspartate 126 and lysine 127 each coordinate Mg(2+). Lysine 127 carries the post-translational modification N6-carboxylysine. Cysteine 197 contacts [2Fe-2S] cluster. Mg(2+) is bound at residue glutamate 447. Serine 473 serves as the catalytic Proton acceptor.

It belongs to the IlvD/Edd family. As to quaternary structure, homodimer. [2Fe-2S] cluster serves as cofactor. The cofactor is Mg(2+).

It carries out the reaction (2R)-2,3-dihydroxy-3-methylbutanoate = 3-methyl-2-oxobutanoate + H2O. The catalysed reaction is (2R,3R)-2,3-dihydroxy-3-methylpentanoate = (S)-3-methyl-2-oxopentanoate + H2O. It participates in amino-acid biosynthesis; L-isoleucine biosynthesis; L-isoleucine from 2-oxobutanoate: step 3/4. Its pathway is amino-acid biosynthesis; L-valine biosynthesis; L-valine from pyruvate: step 3/4. Functionally, functions in the biosynthesis of branched-chain amino acids. Catalyzes the dehydration of (2R,3R)-2,3-dihydroxy-3-methylpentanoate (2,3-dihydroxy-3-methylvalerate) into 2-oxo-3-methylpentanoate (2-oxo-3-methylvalerate) and of (2R)-2,3-dihydroxy-3-methylbutanoate (2,3-dihydroxyisovalerate) into 2-oxo-3-methylbutanoate (2-oxoisovalerate), the penultimate precursor to L-isoleucine and L-valine, respectively. The protein is Dihydroxy-acid dehydratase of Roseiflexus sp. (strain RS-1).